Consider the following 446-residue polypeptide: Phosphoglucosamine mutase (446 aa).

Ser103 acts as the Phosphoserine intermediate in catalysis. Mg(2+) is bound by residues Ser103, Asp242, Asp244, and Asp246. Ser103 carries the post-translational modification Phosphoserine.

It belongs to the phosphohexose mutase family. Mg(2+) is required as a cofactor. Activated by phosphorylation.

It catalyses the reaction alpha-D-glucosamine 1-phosphate = D-glucosamine 6-phosphate. Catalyzes the conversion of glucosamine-6-phosphate to glucosamine-1-phosphate. This Vibrio atlanticus (strain LGP32) (Vibrio splendidus (strain Mel32)) protein is Phosphoglucosamine mutase.